The primary structure comprises 438 residues: MGSSRADLLLVNGMVLTLDPDGRRFDPGAVAILNGEIAAVGPAERLAADFRATRTLDVGGCVVLPGLINAHTHAAMTLFRGLADDLPLMEWLQQHIFPAEAKLTEDWVYWGTMLACAEMIRSGTTTFCDMYLFEHKVAEAARAAGMRAVVGEVLYDFPSPHYGPIENGLRFTESLIERWKEDPLIRIAVEPHAPYTCSPSLLTRCNDIALRHRVPLIIHLSENEAEVEQVLSRYGRRPVAHLEEIGLLGPHLVADHCVALDERDLELLGERGVHVVHNPESNMKLASGIAPVPKLLERGVNVALGTDGCASNNNLDLFGEMDTCAKLHKAATLDPTAMPAETVLRMATAGGARALGMGGRIGELSVGRLADLIVVDFRKPHLVPVYNPISHLVYAARSSDVRHAVIHGRLVMEDRRLLTMNVDEVMERVRYIARTIKP.

Zn(2+) is bound by residues His71 and His73. Glu100 and His192 together coordinate substrate. His219 lines the Zn(2+) pocket. Substrate contacts are provided by Glu222 and Asp307. Asp307 contacts Zn(2+).

This sequence belongs to the metallo-dependent hydrolases superfamily. MTA/SAH deaminase family. Zn(2+) is required as a cofactor.

The enzyme catalyses S-adenosyl-L-homocysteine + H2O + H(+) = S-inosyl-L-homocysteine + NH4(+). It catalyses the reaction S-methyl-5'-thioadenosine + H2O + H(+) = S-methyl-5'-thioinosine + NH4(+). Its function is as follows. Catalyzes the deamination of 5-methylthioadenosine and S-adenosyl-L-homocysteine into 5-methylthioinosine and S-inosyl-L-homocysteine, respectively. Is also able to deaminate adenosine. This Syntrophobacter fumaroxidans (strain DSM 10017 / MPOB) protein is 5-methylthioadenosine/S-adenosylhomocysteine deaminase.